The sequence spans 301 residues: Putative S-adenosyl-L-methionine-dependent methyltransferase MAP_3777 (301 aa).

S-adenosyl-L-methionine contacts are provided by residues Asp126 and 155–156 (DL).

Belongs to the UPF0677 family.

Functionally, exhibits S-adenosyl-L-methionine-dependent methyltransferase activity. This Mycolicibacterium paratuberculosis (strain ATCC BAA-968 / K-10) (Mycobacterium paratuberculosis) protein is Putative S-adenosyl-L-methionine-dependent methyltransferase MAP_3777.